An 88-amino-acid polypeptide reads, in one-letter code: Cell division topological specificity factor (88 aa).

This sequence belongs to the MinE family.

In terms of biological role, prevents the cell division inhibition by proteins MinC and MinD at internal division sites while permitting inhibition at polar sites. This ensures cell division at the proper site by restricting the formation of a division septum at the midpoint of the long axis of the cell. The sequence is that of Cell division topological specificity factor from Clostridium novyi (strain NT).